The sequence spans 68 residues: MAAMKTSDIRAMSPDQMDDAVANLKKERFNLRFQRATGQLENTSRMREARRDIARIKTIAAQKRDAKK.

It belongs to the universal ribosomal protein uL29 family.

The protein is Large ribosomal subunit protein uL29 of Nitrobacter hamburgensis (strain DSM 10229 / NCIMB 13809 / X14).